The sequence spans 109 residues: Flagellar hook-basal body complex protein FliE (109 aa).

Belongs to the FliE family.

Its subcellular location is the bacterial flagellum basal body. The polypeptide is Flagellar hook-basal body complex protein FliE (Pseudomonas aeruginosa (strain LESB58)).